A 175-amino-acid chain; its full sequence is Disulfide bond formation protein B 2 (175 aa).

Over 1–9 the chain is Cytoplasmic; sequence MYLARTRFL. Residues 10–26 form a helical membrane-spanning segment; the sequence is FFLASLACASIIGTAFY. Residues 27 to 44 lie on the Periplasmic side of the membrane; it reads LQQTFGLDPCFLCLIQRA. Cysteines 36 and 39 form a disulfide. A helical membrane pass occupies residues 45–61; it reads AIIACGVLALCAACHAP. Residues 62–68 are Cytoplasmic-facing; sequence GPTGMRR. Residues 69–85 traverse the membrane as a helical segment; the sequence is YSLGFLLIALTGLVTAG. At 86 to 142 the chain is on the periplasmic side; that stretch reads AQVWLQTASADQLIPFITKLEHLLSLLSLDMCIDRLRSDAMFCAEITWTLFGISLPE. A helical membrane pass occupies residues 143–161; it reads WSLLAFTGLALLPLYPLFS. Residues 162-175 are Cytoplasmic-facing; it reads EFSHWLATKDRARY.

Belongs to the DsbB family.

It localises to the cell inner membrane. Functionally, required for disulfide bond formation in some periplasmic proteins. Acts by oxidizing the DsbA protein. The chain is Disulfide bond formation protein B 2 from Pseudomonas savastanoi pv. phaseolicola (strain 1448A / Race 6) (Pseudomonas syringae pv. phaseolicola (strain 1448A / Race 6)).